The following is a 158-amino-acid chain: MAAKFLLTILVTFAAVASLGMADSVLLSGQTLYAGHSLTSGSYTLTIQNNCNLVKYQHGRQIWASDTDGQGSQCRLTLRSDGNLIIYDDNNMVVWGSDCWGNNGTYALVLQQDGLFVIYGPVLWPLGLNGCRSLNGEITVAKDSTEPQHEDIKMVINN.

Positions 1–22 are cleaved as a signal peptide; it reads MAAKFLLTILVTFAAVASLGMA. In terms of domain architecture, Bulb-type lectin spans 23–131; sequence DSVLLSGQTL…VLWPLGLNGC (109 aa). Cys-51 and Cys-74 are joined by a disulfide. Asn-103 is a glycosylation site (N-linked (GlcNAc...) asparagine). The propeptide occupies 136-158; that stretch reads GEITVAKDSTEPQHEDIKMVINN.

In terms of assembly, heterodimer with curculin-1; Disulfide-linked.

In terms of biological role, taste-modifying protein; sweet-tasting. After curculin, water elicits a sweet taste, and sour substances induce a stronger sense of sweetness. The protein is Curculin-2 of Molineria latifolia (Lumbah).